A 28-amino-acid polypeptide reads, in one-letter code: Putative GDSL-motif lipase/hydrolase-like protein (28 aa).

It belongs to the 'GDSL' lipolytic enzyme family.

The polypeptide is Putative GDSL-motif lipase/hydrolase-like protein (Populus euphratica (Euphrates poplar)).